We begin with the raw amino-acid sequence, 739 residues long: Catalase-peroxidase 2 (739 aa).

An N-terminal signal peptide occupies residues 1 to 26 (MKKTTIPTLSALTLAMSLAFGGAAIA). Residues 105–227 (WHSAGVYRIF…MGATQMGLIY (123 aa)) constitute a cross-link (tryptophyl-tyrosyl-methioninium (Trp-Tyr) (with M-253)). Catalysis depends on H106, which acts as the Proton acceptor. A cross-link (tryptophyl-tyrosyl-methioninium (Tyr-Met) (with W-105)) is located at residues 227–253 (YVNPEGPNGVPDPLASAKEIRDTFGRM). H268 is a binding site for heme b.

The protein belongs to the peroxidase family. Peroxidase/catalase subfamily. As to quaternary structure, homodimer or homotetramer. Requires heme b as cofactor. Post-translationally, formation of the three residue Trp-Tyr-Met cross-link is important for the catalase, but not the peroxidase activity of the enzyme.

The catalysed reaction is H2O2 + AH2 = A + 2 H2O. The enzyme catalyses 2 H2O2 = O2 + 2 H2O. Functionally, bifunctional enzyme with both catalase and broad-spectrum peroxidase activity. This Shewanella sp. (strain MR-4) protein is Catalase-peroxidase 2.